An 850-amino-acid polypeptide reads, in one-letter code: Bifunctional uridylyltransferase/uridylyl-removing enzyme (850 aa).

The tract at residues 1-317 (MSARPFADLR…LFPVVAPPLP (317 aa)) is uridylyltransferase. A uridylyl-removing region spans residues 318–673 (IDDDFQLRAG…ARLSPAGEGI (356 aa)). Residues 436–558 (VDEHILTVLR…VGDTRRLDAL (123 aa)) form the HD domain. ACT domains follow at residues 674-755 (QVMV…AVQP) and 783-850 (VLSI…GVLG).

It belongs to the GlnD family. The cofactor is Mg(2+).

The enzyme catalyses [protein-PII]-L-tyrosine + UTP = [protein-PII]-uridylyl-L-tyrosine + diphosphate. It carries out the reaction [protein-PII]-uridylyl-L-tyrosine + H2O = [protein-PII]-L-tyrosine + UMP + H(+). With respect to regulation, uridylyltransferase (UTase) activity is inhibited by glutamine, while glutamine activates uridylyl-removing (UR) activity. Its function is as follows. Modifies, by uridylylation and deuridylylation, the PII regulatory proteins (GlnB and homologs), in response to the nitrogen status of the cell that GlnD senses through the glutamine level. Under low glutamine levels, catalyzes the conversion of the PII proteins and UTP to PII-UMP and PPi, while under higher glutamine levels, GlnD hydrolyzes PII-UMP to PII and UMP (deuridylylation). Thus, controls uridylylation state and activity of the PII proteins, and plays an important role in the regulation of nitrogen assimilation and metabolism. The protein is Bifunctional uridylyltransferase/uridylyl-removing enzyme of Thiobacillus denitrificans (strain ATCC 25259 / T1).